A 697-amino-acid chain; its full sequence is Serine/threonine-protein kinase tousled-like 2 (697 aa).

Disordered stretches follow at residues 27–136 and 289–315; these read KAPL…TAPV and LAKR…NKTN. Over residues 31–44 the composition is skewed to polar residues; that stretch reads NSESSNQSLCSLGS. The segment covering 46–62 has biased composition (basic and acidic residues); sequence SDKELEQTPEKKQNDQR. The segment covering 111–131 has biased composition (low complexity); sequence SSPQHSLSNPLPLPSQQCSPP. Coiled coils occupy residues 264 to 293 and 334 to 372; these read AFQN…AKRK and FKLR…IHNE. The Protein kinase domain maps to 387–666; sequence YLLLHLLGRG…VQQLACDPYL (280 aa). ATP contacts are provided by residues 393 to 401 and K416; that span reads LGRGGFSEV. Residue D517 is the Proton acceptor of the active site.

Belongs to the protein kinase superfamily. Ser/Thr protein kinase family. As to quaternary structure, monomer. May form homodimers; homodimerization may enhance autophosphoylation and enzymatic activity. Heterodimer with TLK1. Mg(2+) is required as a cofactor. Phosphorylated. Autophosphorylated; phosphorylation promotes the assembly of higher order oligomers and enzymatic activity.

The protein localises to the nucleus. The protein resides in the nucleoplasm. Its subcellular location is the cytoplasm. It localises to the perinuclear region. It is found in the cytoskeleton. It catalyses the reaction L-seryl-[protein] + ATP = O-phospho-L-seryl-[protein] + ADP + H(+). The catalysed reaction is L-threonyl-[protein] + ATP = O-phospho-L-threonyl-[protein] + ADP + H(+). Its function is as follows. Serine/threonine-protein kinase involved in the process of chromatin assembly and probably also DNA replication, transcription, repair, and chromosome segregation. Negative regulator of amino acid starvation-induced autophagy. In Xenopus tropicalis (Western clawed frog), this protein is Serine/threonine-protein kinase tousled-like 2.